Reading from the N-terminus, the 51-residue chain is uncharacterized protein (51 aa).

This is an uncharacterized protein from Pseudoalteromonas espejiana (Bacteriophage PM2).